Reading from the N-terminus, the 201-residue chain is Recombination protein RecR (201 aa).

A C4-type zinc finger spans residues 55 to 70 (CVCCGAFCEGRTCALC). The region spanning 78-173 (GIICVVERAQ…IVTRLASGIP (96 aa)) is the Toprim domain.

It belongs to the RecR family.

Functionally, may play a role in DNA repair. It seems to be involved in an RecBC-independent recombinational process of DNA repair. It may act with RecF and RecO. In Treponema pallidum (strain Nichols), this protein is Recombination protein RecR.